We begin with the raw amino-acid sequence, 474 residues long: A-type ATP synthase subunit B (474 aa).

The protein belongs to the ATPase alpha/beta chains family. In terms of assembly, has multiple subunits with at least A(3), B(3), C, D, E, F, H, I and proteolipid K(x).

Its subcellular location is the cell membrane. In terms of biological role, component of the A-type ATP synthase that produces ATP from ADP in the presence of a proton gradient across the membrane. The B chain is a regulatory subunit. This chain is A-type ATP synthase subunit B, found in Halorubrum lacusprofundi (strain ATCC 49239 / DSM 5036 / JCM 8891 / ACAM 34).